We begin with the raw amino-acid sequence, 210 residues long: Large ribosomal subunit protein uL4 (210 aa).

The segment covering 44-54 (QRQGTASTLTR) has biased composition (polar residues). The interval 44-96 (QRQGTASTLTRSEVRGGGRKPYKQKGTGRARQGSIRTPLRPGGGVIFGPKPRS) is disordered. Residues 60–71 (GGRKPYKQKGTG) are compositionally biased toward basic residues.

This sequence belongs to the universal ribosomal protein uL4 family. In terms of assembly, part of the 50S ribosomal subunit.

One of the primary rRNA binding proteins, this protein initially binds near the 5'-end of the 23S rRNA. It is important during the early stages of 50S assembly. It makes multiple contacts with different domains of the 23S rRNA in the assembled 50S subunit and ribosome. Its function is as follows. Forms part of the polypeptide exit tunnel. The sequence is that of Large ribosomal subunit protein uL4 from Prochlorococcus marinus (strain MIT 9515).